Consider the following 71-residue polypeptide: Long neurotoxin 1 (71 aa).

Cystine bridges form between Cys3–Cys20, Cys14–Cys41, Cys26–Cys30, Cys45–Cys56, and Cys57–Cys62.

This sequence belongs to the three-finger toxin family. Long-chain subfamily. Type II alpha-neurotoxin sub-subfamily. In terms of tissue distribution, expressed by the venom gland.

Its subcellular location is the secreted. Functionally, binds with high affinity to muscular (alpha-1/CHRNA1) and neuronal (alpha-7/CHRNA7) nicotinic acetylcholine receptor (nAChR) and inhibits acetylcholine from binding to the receptor, thereby impairing neuromuscular and neuronal transmission. In Naja haje haje (Egyptian cobra), this protein is Long neurotoxin 1.